Here is a 340-residue protein sequence, read N- to C-terminus: uncharacterized protein (340 aa).

Over residues 193–207 (KELPKEKKKSDGDKT) the composition is skewed to basic and acidic residues. A disordered region spans residues 193–340 (KELPKEKKKS…FIPLQPKKKI (148 aa)). Over residues 217 to 228 (FFGFWGHSGSKS) the composition is skewed to low complexity. The segment covering 235-244 (EKPIEAKNEI) has biased composition (basic and acidic residues). Polar residues-rich tracts occupy residues 263-279 (SDKN…SDQQ) and 307-328 (PAQS…SLTL).

This is an uncharacterized protein from Saccharomyces cerevisiae (strain ATCC 204508 / S288c) (Baker's yeast).